The sequence spans 515 residues: Probable coatomer subunit delta (515 aa).

A compositionally biased stretch (basic and acidic residues) spans 161–180; it reads AKQAMAEKAKELKRAQKEAL. Residues 161-231 are disordered; that stretch reads AKQAMAEKAK…GGKALKLGGK (71 aa). The segment covering 187-198 has biased composition (low complexity); it reads SYQSSTGISSSS. An MHD domain is found at 276–515; that stretch reads REVVHVRTEE…TFNSENFEIV (240 aa).

The protein belongs to the adaptor complexes medium subunit family. Delta-COP subfamily. As to quaternary structure, oligomeric complex that consists of at least the alpha, beta, beta', gamma, delta, epsilon and zeta subunits.

It localises to the cytoplasm. The protein resides in the golgi apparatus membrane. Its subcellular location is the cytoplasmic vesicle. The protein localises to the COPI-coated vesicle membrane. Functionally, the coatomer is a cytosolic protein complex that binds to dilysine motifs and reversibly associates with Golgi non-clathrin-coated vesicles, which further mediate biosynthetic protein transport from the ER, via the Golgi up to the trans Golgi network. Coatomer complex is required for budding from Golgi membranes, and is essential for the retrograde Golgi-to-ER transport of dilysine-tagged proteins. This is Probable coatomer subunit delta from Caenorhabditis elegans.